The following is a 428-amino-acid chain: GTPase Obg (428 aa).

Residues 1-158 (MFVDQVKIYV…RDVILELKVL (158 aa)) form the Obg domain. The OBG-type G domain occupies 159–329 (ADVGLVGFPS…LLFEVANLIE (171 aa)). Residues 165–172 (GFPSVGKS), 190–194 (FTTIV), 212–215 (DLPG), 282–285 (NKMD), and 310–312 (SAV) contribute to the GTP site. Residues Ser-172 and Thr-192 each coordinate Mg(2+). One can recognise an OCT domain in the interval 350-428 (KFETEGVKFD…ILEYEFEFID (79 aa)).

It belongs to the TRAFAC class OBG-HflX-like GTPase superfamily. OBG GTPase family. Monomer. Mg(2+) is required as a cofactor.

It is found in the cytoplasm. In terms of biological role, an essential GTPase which binds GTP, GDP and possibly (p)ppGpp with moderate affinity, with high nucleotide exchange rates and a fairly low GTP hydrolysis rate. Plays a role in control of the cell cycle, stress response, ribosome biogenesis and in those bacteria that undergo differentiation, in morphogenesis control. The sequence is that of GTPase Obg from Bacillus thuringiensis (strain Al Hakam).